We begin with the raw amino-acid sequence, 1705 residues long: Rho guanine nucleotide exchange factor 28 (1705 aa).

2 disordered regions span residues 287-316 (RPEE…SAAE) and 473-524 (KKRS…ETNT). Phosphoserine occurs at positions 313 and 478. Positions 501 to 510 (PGSQSSSRTG) are enriched in polar residues. At Ser-624 the chain carries Phosphoserine. The disordered stretch occupies residues 630 to 649 (MTSPRNKSKTKSKDAKDKEK). Residues 640 to 649 (KSKDAKDKEK) show a composition bias toward basic and acidic residues. The Phorbol-ester/DAG-type zinc-finger motif lies at 652-699 (RHQFAPGTFSGVLQCLVCDKTLLGKESLQCSNCNANVHKGCKDAAPAC). Composition is skewed to polar residues over residues 710 to 721 (NKPQTILGNSSF) and 759 to 775 (VPGT…TSLE). The tract at residues 710–800 (NKPQTILGNS…ELLQSMGSSP (91 aa)) is disordered. Basic and acidic residues predominate over residues 777-791 (ESDHNSCRSRSHSDE). One can recognise a DH domain in the interval 849-1044 (KRQDVIFELM…KDMIATVDLK (196 aa)). The PH domain maps to 1086 to 1188 (TLLYDGLVYW…WMRRIQQAVE (103 aa)). Residues 1187–1207 (VESCPEEKGGRTSESDEDKRK) are disordered. Residues 1191–1207 (PEEKGGRTSESDEDKRK) show a composition bias toward basic and acidic residues. The interaction with PTK2/FAK1; required for regulation of axonal branching and synapse formation stretch occupies residues 1295-1304 (AVSQSCEDSC). The segment at 1312 to 1339 (TLSSHDVPGSPTASLVTGGREGRGCSDV) is disordered. The interval 1372-1383 (IIQAIQNLTRLL) is mediates cytoplasmic retention and interaction with YWHAH. An interaction with microtubules region spans residues 1425 to 1705 (QKSRDADRQH…DGAKENIVYL (281 aa)). Residues 1488 to 1525 (RSRGELDLQLQEYQHSLERLREGQRLVEREQARMRAQQ) adopt a coiled-coil conformation. The interval 1496–1527 (QLQEYQHSLERLREGQRLVEREQARMRAQQSL) is RNA-binding. At Ser-1538 the chain carries Phosphoserine. Residues 1566–1579 (FINEALVQMSFNTF) are mediates cytoplasmic retention and interaction with MAPK8IP1. The disordered stretch occupies residues 1638-1705 (PFHESSKDSC…DGAKENIVYL (68 aa)). The span at 1641 to 1655 (ESSKDSCKNDLDTSH) shows a compositional bias: basic and acidic residues. Positions 1656–1669 (TESPTPHDSNSHRP) are enriched in polar residues. A compositionally biased stretch (basic and acidic residues) spans 1688 to 1699 (TRQDGETGDGAK).

In terms of assembly, homooligomer; forms cytoplasmic aggregates. Forms a complex with MAPK8 and MAPK8IP1. Interacts with RHOA. Interacts with microtubules. Interacts with YWHAE and YWHAH. Interacts with PTK2/FAK1. Interacts with NEFL. Interacts with CTNND2; prevents interaction with RHOA. Post-translationally, phosphorylated on tyrosine upon stimulation of cells by laminin.

The protein resides in the cytoplasm. The protein localises to the cell membrane. Functionally, functions as a RHOA-specific guanine nucleotide exchange factor regulating signaling pathways downstream of integrins and growth factor receptors. Functions in axonal branching, synapse formation and dendritic morphogenesis. Also functions in focal adhesion formation, cell motility and B-lymphocytes activation. May regulate NEFL expression and aggregation and play a role in apoptosis. The sequence is that of Rho guanine nucleotide exchange factor 28 (ARHGEF28) from Homo sapiens (Human).